A 302-amino-acid chain; its full sequence is D-alanine--D-alanine ligase B (302 aa).

An ATP-grasp domain is found at 99–294 (KKVLKAENIR…YSKFIDLIIE (196 aa)). 126-181 (IEEIGYPVFVKPNNGGSSVATFKVYKKEDIKNSVMEGLKYDEEVIIESFIKGREIT) is a binding site for ATP. Mg(2+) is bound by residues D248, E261, and N263.

This sequence belongs to the D-alanine--D-alanine ligase family. The cofactor is Mg(2+). Mn(2+) serves as cofactor.

It localises to the cytoplasm. The catalysed reaction is 2 D-alanine + ATP = D-alanyl-D-alanine + ADP + phosphate + H(+). Its pathway is cell wall biogenesis; peptidoglycan biosynthesis. Cell wall formation. The polypeptide is D-alanine--D-alanine ligase B (Clostridium perfringens (strain 13 / Type A)).